A 545-amino-acid polypeptide reads, in one-letter code: Glucose-6-phosphate isomerase (545 aa).

The Proton donor role is filled by E351. Residues H382 and K510 contribute to the active site.

The protein belongs to the GPI family.

The protein resides in the cytoplasm. The enzyme catalyses alpha-D-glucose 6-phosphate = beta-D-fructose 6-phosphate. It functions in the pathway carbohydrate biosynthesis; gluconeogenesis. The protein operates within carbohydrate degradation; glycolysis; D-glyceraldehyde 3-phosphate and glycerone phosphate from D-glucose: step 2/4. In terms of biological role, catalyzes the reversible isomerization of glucose-6-phosphate to fructose-6-phosphate. This Shewanella baltica (strain OS223) protein is Glucose-6-phosphate isomerase.